The sequence spans 175 residues: CASP-like protein 2C1 (175 aa).

The Cytoplasmic portion of the chain corresponds to 1 to 7 (MVKLRET). Residues 8 to 28 (EVILRLCIVFFLLLTSCLIGL) traverse the membrane as a helical segment. Topologically, residues 29–45 (DSQTKEIAYIHKNVSFR) are extracellular. Asn41 is a glycosylation site (N-linked (GlcNAc...) asparagine). A helical membrane pass occupies residues 46 to 66 (YLLALEAELYIDVVVAAYNLV). The Cytoplasmic portion of the chain corresponds to 67-91 (QLGLGWYNVEQKTSNPKWFSYLLDQ). The chain crosses the membrane as a helical span at residues 92 to 112 (TAAYVVFAGTSAAAQHSLLVV). Residues 113-136 (TGSRELQWMKWCYKFTRFCFQMGS) lie on the Extracellular side of the membrane. A helical transmembrane segment spans residues 137–157 (AIILNYIAAALMVLLSSISAF). Topologically, residues 158–175 (NLFRLYSPKRFFRFKSSS) are cytoplasmic.

The protein belongs to the Casparian strip membrane proteins (CASP) family. In terms of assembly, homodimer and heterodimers.

It is found in the cell membrane. The sequence is that of CASP-like protein 2C1 from Arabidopsis thaliana (Mouse-ear cress).